Here is a 927-residue protein sequence, read N- to C-terminus: DNA polymerase alpha-binding protein (927 aa).

WD repeat units lie at residues 10–49 (FDFG…EEPE), 134–173 (KIDE…PNKV), 227–266 (AANR…LQKT), and 273–313 (STKA…IHYT). Residues serine 377, serine 379, and serine 398 each carry the phosphoserine modification. Threonine 401 and threonine 411 each carry phosphothreonine. Position 463 is a phosphoserine (serine 463). The stretch at 699 to 739 (GSDNTLLLLSKWRSPEESKWLPILDSNMEIWKMSGGKETTD) is one WD 5 repeat.

The protein localises to the nucleus. Its function is as follows. Accessory factor for DNA replication. It plays a role in accurately duplicating the genome in vivo. The protein is DNA polymerase alpha-binding protein (CTF4) of Saccharomyces cerevisiae (strain ATCC 204508 / S288c) (Baker's yeast).